The primary structure comprises 332 residues: Anthranilate phosphoribosyltransferase (332 aa).

Residues glycine 79, 82–83 (GD), serine 87, 89–92 (NIST), 107–115 (KHGNRSVSS), and serine 119 each bind 5-phospho-alpha-D-ribose 1-diphosphate. Anthranilate is bound at residue glycine 79. Serine 91 contacts Mg(2+). Residue asparagine 110 coordinates anthranilate. Arginine 165 is an anthranilate binding site. Mg(2+) is bound by residues aspartate 223 and glutamate 224.

This sequence belongs to the anthranilate phosphoribosyltransferase family. In terms of assembly, homodimer. Requires Mg(2+) as cofactor.

It carries out the reaction N-(5-phospho-beta-D-ribosyl)anthranilate + diphosphate = 5-phospho-alpha-D-ribose 1-diphosphate + anthranilate. It participates in amino-acid biosynthesis; L-tryptophan biosynthesis; L-tryptophan from chorismate: step 2/5. Catalyzes the transfer of the phosphoribosyl group of 5-phosphorylribose-1-pyrophosphate (PRPP) to anthranilate to yield N-(5'-phosphoribosyl)-anthranilate (PRA). In Serratia proteamaculans (strain 568), this protein is Anthranilate phosphoribosyltransferase.